Consider the following 388-residue polypeptide: Succinate--CoA ligase [ADP-forming] subunit beta (388 aa).

The region spanning 9–244 is the ATP-grasp domain; it reads KQLFARYGMP…LSQEDERESR (236 aa). ATP contacts are provided by residues lysine 46, 53-55, glutamate 99, threonine 102, and glutamate 107; that span reads GRG. Asparagine 199 and aspartate 213 together coordinate Mg(2+). Residues asparagine 264 and 321 to 323 contribute to the substrate site; that span reads GIV.

Belongs to the succinate/malate CoA ligase beta subunit family. In terms of assembly, heterotetramer of two alpha and two beta subunits. The cofactor is Mg(2+).

The enzyme catalyses succinate + ATP + CoA = succinyl-CoA + ADP + phosphate. It catalyses the reaction GTP + succinate + CoA = succinyl-CoA + GDP + phosphate. It participates in carbohydrate metabolism; tricarboxylic acid cycle; succinate from succinyl-CoA (ligase route): step 1/1. Functionally, succinyl-CoA synthetase functions in the citric acid cycle (TCA), coupling the hydrolysis of succinyl-CoA to the synthesis of either ATP or GTP and thus represents the only step of substrate-level phosphorylation in the TCA. The beta subunit provides nucleotide specificity of the enzyme and binds the substrate succinate, while the binding sites for coenzyme A and phosphate are found in the alpha subunit. The protein is Succinate--CoA ligase [ADP-forming] subunit beta of Serratia proteamaculans (strain 568).